A 179-amino-acid chain; its full sequence is Ribosomal RNA small subunit methyltransferase G (179 aa).

S-adenosyl-L-methionine is bound by residues glycine 54, phenylalanine 59, 105–106 (IE), and arginine 121.

This sequence belongs to the methyltransferase superfamily. RNA methyltransferase RsmG family.

The protein localises to the cytoplasm. It catalyses the reaction guanosine(527) in 16S rRNA + S-adenosyl-L-methionine = N(7)-methylguanosine(527) in 16S rRNA + S-adenosyl-L-homocysteine. In terms of biological role, specifically methylates the N7 position of guanine in position 527 of 16S rRNA. This is Ribosomal RNA small subunit methyltransferase G from Helicobacter bizzozeronii.